Consider the following 494-residue polypeptide: Ketol-acid reductoisomerase (NADP(+)) (494 aa).

Positions 14-208 constitute a KARI N-terminal Rossmann domain; sequence LEQLGKCRFM…GGHRAGVLQS (195 aa). Residues 45-48, R68, R76, S78, and 108-110 each bind NADP(+); these read CGAQ and DKQ. H132 is an active-site residue. G158 is a binding site for NADP(+). KARI C-terminal knotted domains lie at 209–344 and 345–487; these read SFVA…NAPA and FDGA…MKDM. Mg(2+) contacts are provided by D217, E221, E389, and E393. S414 contacts substrate.

Belongs to the ketol-acid reductoisomerase family. The cofactor is Mg(2+).

It carries out the reaction (2R)-2,3-dihydroxy-3-methylbutanoate + NADP(+) = (2S)-2-acetolactate + NADPH + H(+). It catalyses the reaction (2R,3R)-2,3-dihydroxy-3-methylpentanoate + NADP(+) = (S)-2-ethyl-2-hydroxy-3-oxobutanoate + NADPH + H(+). It functions in the pathway amino-acid biosynthesis; L-isoleucine biosynthesis; L-isoleucine from 2-oxobutanoate: step 2/4. The protein operates within amino-acid biosynthesis; L-valine biosynthesis; L-valine from pyruvate: step 2/4. Functionally, involved in the biosynthesis of branched-chain amino acids (BCAA). Catalyzes an alkyl-migration followed by a ketol-acid reduction of (S)-2-acetolactate (S2AL) to yield (R)-2,3-dihydroxy-isovalerate. In the isomerase reaction, S2AL is rearranged via a Mg-dependent methyl migration to produce 3-hydroxy-3-methyl-2-ketobutyrate (HMKB). In the reductase reaction, this 2-ketoacid undergoes a metal-dependent reduction by NADPH to yield (R)-2,3-dihydroxy-isovalerate. This is Ketol-acid reductoisomerase (NADP(+)) from Tolumonas auensis (strain DSM 9187 / NBRC 110442 / TA 4).